The sequence spans 497 residues: Tripartite motif-containing protein 5 (497 aa).

Ala2 carries the N-acetylalanine modification. Residues 15-60 form an RING-type zinc finger; sequence CPICLELLTEPLSLPCGHSFCQACITANHRKSMLYKEGERSCPVCR. Ser87 bears the Phosphoserine mark. The segment at 92–133 adopts a B box-type zinc-finger fold; that stretch reads LKVDHCARHGEKLLLFCQEDSKVICWLCERSQEHRGHHTFLM. Residues Cys97, His100, Cys119, and His125 each contribute to the Zn(2+) site. Positions 137–225 form a coiled coil; the sequence is AQEYHVKLQT…LTKSETEMVQ (89 aa). The interval 187 to 200 is required for interaction with GABARAP and for autophagy; sequence FEQLREILDWEESN. A B30.2/SPRY domain is found at 283-497; the sequence is LKGMLDMFRE…VPMTLCSPSS (215 aa).

It belongs to the TRIM/RBCC family. As to quaternary structure, can form homodimers and homotrimers. In addition to lower-order dimerization, also exhibits a higher-order multimerization and both low- and high-order multimerizations are essential for its restriction activity. Interacts with BTBD1 and BTBD2. Interacts with PSMC4, PSMC5, PSMD7 and HSPA8/HSC70. Interacts (via B30.2/SPRY domain) with HSPA1A/B. Interacts with PSMC2, MAP3K7/TAK1, TAB2 and TAB3. Interacts with SQSTM1. Interacts with TRIM6 and TRIM34. Interacts with ULK1 (phosphorylated form), GABARAP, GABARAPL1, GABARAPL2, MAP1LC3A, MAP1LC3C and BECN1. Post-translationally, degraded in a proteasome-independent fashion in the absence of viral infection but in a proteasome-dependent fashion following exposure to restriction sensitive virus. In terms of processing, autoubiquitinated in a RING finger- and UBE2D2-dependent manner. Monoubiquitinated by TRIM21. Deubiquitinated by Yersinia YopJ. Ubiquitination may not lead to proteasomal degradation.

The protein localises to the cytoplasm. Its subcellular location is the nucleus. It catalyses the reaction S-ubiquitinyl-[E2 ubiquitin-conjugating enzyme]-L-cysteine + [acceptor protein]-L-lysine = [E2 ubiquitin-conjugating enzyme]-L-cysteine + N(6)-ubiquitinyl-[acceptor protein]-L-lysine.. It functions in the pathway protein modification; protein ubiquitination. Functionally, capsid-specific restriction factor that prevents infection from non-host-adapted retroviruses. Blocks viral replication early in the life cycle, after viral entry but before reverse transcription. In addition to acting as a capsid-specific restriction factor, also acts as a pattern recognition receptor that activates innate immune signaling in response to the retroviral capsid lattice. Binding to the viral capsid triggers its E3 ubiquitin ligase activity, and in concert with the heterodimeric ubiquitin conjugating enzyme complex UBE2V1-UBE2N (also known as UBC13-UEV1A complex) generates 'Lys-63'-linked polyubiquitin chains, which in turn are catalysts in the autophosphorylation of the MAP3K7/TAK1 complex (includes TAK1, TAB2, and TAB3). Activation of the MAP3K7/TAK1 complex by autophosphorylation results in the induction and expression of NF-kappa-B and MAPK-responsive inflammatory genes, thereby leading to an innate immune response in the infected cell. Plays a role in regulating autophagy through activation of autophagy regulator BECN1 by causing its dissociation from its inhibitors BCL2 and TAB2. This is Tripartite motif-containing protein 5 (TRIM5) from Papio anubis (Olive baboon).